Reading from the N-terminus, the 555-residue chain is Urocanate hydratase (555 aa).

Residues 51 to 52 (GG), Q129, 175 to 177 (GMG), E195, 262 to 266 (QTSAH), 272 to 273 (YL), and Y321 contribute to the NAD(+) site. The active site involves C409. G491 contributes to the NAD(+) binding site.

This sequence belongs to the urocanase family. NAD(+) is required as a cofactor.

Its subcellular location is the cytoplasm. It catalyses the reaction 4-imidazolone-5-propanoate = trans-urocanate + H2O. It participates in amino-acid degradation; L-histidine degradation into L-glutamate; N-formimidoyl-L-glutamate from L-histidine: step 2/3. Functionally, catalyzes the conversion of urocanate to 4-imidazolone-5-propionate. In Stenotrophomonas maltophilia (strain R551-3), this protein is Urocanate hydratase.